The following is a 219-amino-acid chain: Small ribosomal subunit protein uS3c (219 aa).

Positions 39 to 109 constitute a KH type-2 domain; sequence IRQYIEKNLS…QIRINVIEVK (71 aa).

It belongs to the universal ribosomal protein uS3 family. In terms of assembly, part of the 30S ribosomal subunit.

It is found in the plastid. The protein resides in the cyanelle. The protein is Small ribosomal subunit protein uS3c (rps3) of Cyanophora paradoxa.